A 357-amino-acid polypeptide reads, in one-letter code: Arginine kinase (357 aa).

Alanine 2 carries the post-translational modification N-acetylalanine. The region spanning 9–91 (KLEEGFKKLQ…FDPIIEDYHK (83 aa)) is the Phosphagen kinase N-terminal domain. Residue 64 to 68 (GVGVY) participates in L-arginine binding. The 238-residue stretch at 119-356 (FVISTRVRCG…LELIKIEKEM (238 aa)) folds into the Phosphagen kinase C-terminal domain. Residues 122 to 126 (STRVR) and histidine 185 contribute to the ATP site. Glutamate 225 is a binding site for L-arginine. Position 229 (arginine 229) interacts with ATP. Residue cysteine 271 coordinates L-arginine. ATP contacts are provided by residues 280-284 (RASVH) and 309-314 (RGTRGE). Residue glutamate 314 participates in L-arginine binding.

This sequence belongs to the ATP:guanido phosphotransferase family.

It catalyses the reaction L-arginine + ATP = N(omega)-phospho-L-arginine + ADP + H(+). The protein is Arginine kinase of Pachygrapsus marmoratus (Marbled rock crab).